Here is a 153-residue protein sequence, read N- to C-terminus: MKVIFLKDVPNQGKKNEIKEVSDGYARNYLLPNQLVKIATNNSIQTLKDHLKADQEEKELAKAQTKQIKKTLEELTLHFKLQTNDDKVFGSISSQDIVNQLKDVHRIEIDKKKFIHFKNINKIGINYVKVKLDFGIEALIKIDVKEVQKWNKN.

The protein belongs to the bacterial ribosomal protein bL9 family.

Its function is as follows. Binds to the 23S rRNA. The chain is Large ribosomal subunit protein bL9 from Mycoplasma mycoides subsp. mycoides SC (strain CCUG 32753 / NCTC 10114 / PG1).